The following is a 48-amino-acid chain: MKKIVIVGGGIAGMGIANTLADKLKGKAEITVINKEDFYFAGPSRXIL.

As to quaternary structure, monomer. Post-translationally, the blue color is due to an unidentified non-fluorescent cofactor, covalently bound to it.

Its function is as follows. Ambineela is a blue protein and has a pI of 8.7. The polypeptide is Ambineela (Acidianus ambivalens (Desulfurolobus ambivalens)).